Reading from the N-terminus, the 229-residue chain is Uridylate kinase (229 aa).

Residue G11 to S12 coordinates ATP. A UMP-binding site is contributed by G45. Residues G46 and R50 each coordinate ATP. UMP-binding positions include D67 and T114–T120. Residues T140, Y146, and D149 each contribute to the ATP site.

It belongs to the UMP kinase family. As to quaternary structure, homohexamer.

Its subcellular location is the cytoplasm. It carries out the reaction UMP + ATP = UDP + ADP. Its pathway is pyrimidine metabolism; CTP biosynthesis via de novo pathway; UDP from UMP (UMPK route): step 1/1. Its activity is regulated as follows. Inhibited by UTP. In terms of biological role, catalyzes the reversible phosphorylation of UMP to UDP. This is Uridylate kinase from Thermoplasma acidophilum (strain ATCC 25905 / DSM 1728 / JCM 9062 / NBRC 15155 / AMRC-C165).